Reading from the N-terminus, the 460-residue chain is Argininosuccinate lyase (460 aa).

Belongs to the lyase 1 family. Argininosuccinate lyase subfamily.

Its subcellular location is the cytoplasm. The catalysed reaction is 2-(N(omega)-L-arginino)succinate = fumarate + L-arginine. Its pathway is amino-acid biosynthesis; L-arginine biosynthesis; L-arginine from L-ornithine and carbamoyl phosphate: step 3/3. The sequence is that of Argininosuccinate lyase from Buchnera aphidicola subsp. Cinara cedri (strain Cc).